The sequence spans 398 residues: NADH-quinone oxidoreductase subunit D (398 aa).

The protein belongs to the complex I 49 kDa subunit family. As to quaternary structure, NDH-1 is composed of 14 different subunits. Subunits NuoB, C, D, E, F, and G constitute the peripheral sector of the complex.

The protein localises to the cell inner membrane. It carries out the reaction a quinone + NADH + 5 H(+)(in) = a quinol + NAD(+) + 4 H(+)(out). Functionally, NDH-1 shuttles electrons from NADH, via FMN and iron-sulfur (Fe-S) centers, to quinones in the respiratory chain. The immediate electron acceptor for the enzyme in this species is believed to be ubiquinone. Couples the redox reaction to proton translocation (for every two electrons transferred, four hydrogen ions are translocated across the cytoplasmic membrane), and thus conserves the redox energy in a proton gradient. This chain is NADH-quinone oxidoreductase subunit D, found in Rhodospirillum centenum (strain ATCC 51521 / SW).